A 347-amino-acid polypeptide reads, in one-letter code: D-alanine--D-alanine ligase (347 aa).

One can recognise an ATP-grasp domain in the interval 131–333 (KRVLESAGIA…YPELIERLVD (203 aa)). An ATP-binding site is contributed by 161 to 216 (EEKLAYPVFAKPSNMGSSVGISKSENQEELRQALKLAFRYDSRVLVEQGVNAREIE). Mg(2+) is bound by residues Asp287, Glu300, and Asn302.

This sequence belongs to the D-alanine--D-alanine ligase family. Mg(2+) serves as cofactor. The cofactor is Mn(2+).

The protein localises to the cytoplasm. The catalysed reaction is 2 D-alanine + ATP = D-alanyl-D-alanine + ADP + phosphate + H(+). Its pathway is cell wall biogenesis; peptidoglycan biosynthesis. In terms of biological role, cell wall formation. The polypeptide is D-alanine--D-alanine ligase (Streptococcus pneumoniae (strain P1031)).